The chain runs to 840 residues: DNA helicase MCM8 (840 aa).

Positions 16 to 54 (QSWKRGRGGGNFSGKWREREHRPDLSKTTGKRTSEQTPQ) are disordered. A compositionally biased stretch (basic and acidic residues) spans 30-40 (KWREREHRPDL). In terms of domain architecture, MCM spans 402–609 (LFKLIVNSLC…HHDHLLSEHV (208 aa)). Residue 454–461 (GDPGLGKS) coordinates ATP. A Phosphoserine modification is found at Ser-630.

The protein belongs to the MCM family. In terms of assembly, component of the MCM8-MCM9 complex, which forms a hexamer composed of MCM8 and MCM9. Interacts with the DNA mismatch repair (MMR) complex composed at least of MSH2, MSH3, MSH6, PMS1 and MLH1. Interacts with RAD51; the interaction recruits RAD51 to DNA damage sites. Interacts with the MRN complex composed of MRE11, RAD50 and NBN/NBS1. Interacts with CDC6 and ORC2. Interacts with HROB; the interaction recruits the MCM8-MCM9 complex to DNA damage sites. In terms of tissue distribution, highest levels in placenta, lung and pancreas. Low levels in skeletal muscle and kidney. Expressed in various tumors with highest levels in colon and lung cancers.

Its subcellular location is the nucleus. The protein localises to the chromosome. It carries out the reaction ATP + H2O = ADP + phosphate + H(+). Its function is as follows. Component of the MCM8-MCM9 complex, a complex involved in the repair of double-stranded DNA breaks (DBSs) and DNA interstrand cross-links (ICLs) by homologous recombination (HR). Required for DNA resection by the MRE11-RAD50-NBN/NBS1 (MRN) complex by recruiting the MRN complex to the repair site and by promoting the complex nuclease activity. Probably by regulating the localization of the MNR complex, indirectly regulates the recruitment of downstream effector RAD51 to DNA damage sites including DBSs and ICLs. The MCM8-MCM9 complex is dispensable for DNA replication and S phase progression. However, may play a non-essential for DNA replication: may be involved in the activation of the prereplicative complex (pre-RC) during G(1) phase by recruiting CDC6 to the origin recognition complex (ORC). Probably by regulating HR, plays a key role during gametogenesis. Stabilizes MCM9 protein. The sequence is that of DNA helicase MCM8 (MCM8) from Homo sapiens (Human).